We begin with the raw amino-acid sequence, 291 residues long: Taste receptor type 2 member 16 (291 aa).

Residue Met-1 is a topological domain, extracellular. A helical transmembrane segment spans residues 2–22; that stretch reads IPIQLTVFFMIIYVLESLTII. Residues 23-41 are Cytoplasmic-facing; that stretch reads VQSSLIVAVLGREWLQVRR. The helical transmembrane segment at 42 to 62 threads the bilayer; the sequence is LMPVDMILISLGISRFCLQWA. Residues 63–84 are Extracellular-facing; the sequence is SMLNNFCSYFNLNYVLCNLTIT. The N-linked (GlcNAc...) asparagine glycan is linked to Asn-80. A helical transmembrane segment spans residues 85-105; that stretch reads WEFFNILTFWLNSLLTVFYCI. Residues 106-125 lie on the Cytoplasmic side of the membrane; the sequence is KASSFTHHIFLWLRWRILRL. The chain crosses the membrane as a helical span at residues 126–146; that stretch reads FPWILLGSLMITCVTIIPSAI. At 147 to 182 the chain is on the extracellular side; it reads GNYIQIQLLTMEHLPRNSTVTDKLEKFHQYQFQAHT. N-linked (GlcNAc...) asparagine glycosylation occurs at Asn-163. The chain crosses the membrane as a helical span at residues 183–203; the sequence is VALVIPFILFLASTILLMASL. Residues 204-228 lie on the Cytoplasmic side of the membrane; it reads TKQIQHHSTGHCNPSMKAHFTALRS. The chain crosses the membrane as a helical span at residues 229–249; that stretch reads LAVLFIVFTSYFLTILITIIG. Topologically, residues 250–257 are extracellular; the sequence is TLFDKRCW. A helical membrane pass occupies residues 258 to 278; that stretch reads LWVWEAFVYAFILMHSTSLML. The Cytoplasmic portion of the chain corresponds to 279–291; the sequence is SSPTLKRILKGKC.

Belongs to the G-protein coupled receptor T2R family. Interacts with RTP3 and RTP4.

It localises to the cell membrane. Functionally, receptor that may play a role in the perception of bitterness and is gustducin-linked. May play a role in sensing the chemical composition of the gastrointestinal content. The activity of this receptor may stimulate alpha gustducin, mediate PLC-beta-2 activation and lead to the gating of TRPM5. The chain is Taste receptor type 2 member 16 (TAS2R16) from Pan paniscus (Pygmy chimpanzee).